The chain runs to 397 residues: S-adenosylmethionine synthase (397 aa).

An ATP-binding site is contributed by His15. Asp17 lines the Mg(2+) pocket. Glu43 is a binding site for K(+). L-methionine is bound by residues Glu56 and Gln99. The segment at 99 to 109 (QSPDIAMGVNK) is flexible loop. ATP-binding positions include 175-177 (DGK), 241-242 (RF), Asp250, 256-257 (RK), Ala273, and Lys277. Asp250 contacts L-methionine. Lys281 contacts L-methionine.

This sequence belongs to the AdoMet synthase family. As to quaternary structure, homotetramer; dimer of dimers. Requires Mg(2+) as cofactor. K(+) is required as a cofactor.

It is found in the cytoplasm. It carries out the reaction L-methionine + ATP + H2O = S-adenosyl-L-methionine + phosphate + diphosphate. Its pathway is amino-acid biosynthesis; S-adenosyl-L-methionine biosynthesis; S-adenosyl-L-methionine from L-methionine: step 1/1. Its function is as follows. Catalyzes the formation of S-adenosylmethionine (AdoMet) from methionine and ATP. The overall synthetic reaction is composed of two sequential steps, AdoMet formation and the subsequent tripolyphosphate hydrolysis which occurs prior to release of AdoMet from the enzyme. The protein is S-adenosylmethionine synthase of Acetivibrio thermocellus (strain ATCC 27405 / DSM 1237 / JCM 9322 / NBRC 103400 / NCIMB 10682 / NRRL B-4536 / VPI 7372) (Clostridium thermocellum).